We begin with the raw amino-acid sequence, 698 residues long: Elongation factor G (698 aa).

The tr-type G domain occupies 8–284 (ANVRNIGIMA…AVVDYLPSPL (277 aa)). GTP contacts are provided by residues 17 to 24 (AHIDAGKT), 81 to 85 (DTPGH), and 135 to 138 (NKLD).

It belongs to the TRAFAC class translation factor GTPase superfamily. Classic translation factor GTPase family. EF-G/EF-2 subfamily.

Its subcellular location is the cytoplasm. Its function is as follows. Catalyzes the GTP-dependent ribosomal translocation step during translation elongation. During this step, the ribosome changes from the pre-translocational (PRE) to the post-translocational (POST) state as the newly formed A-site-bound peptidyl-tRNA and P-site-bound deacylated tRNA move to the P and E sites, respectively. Catalyzes the coordinated movement of the two tRNA molecules, the mRNA and conformational changes in the ribosome. This is Elongation factor G from Salinispora tropica (strain ATCC BAA-916 / DSM 44818 / JCM 13857 / NBRC 105044 / CNB-440).